We begin with the raw amino-acid sequence, 342 residues long: UDP-3-O-acylglucosamine N-acyltransferase (342 aa).

Residue His253 is the Proton acceptor of the active site.

This sequence belongs to the transferase hexapeptide repeat family. LpxD subfamily. As to quaternary structure, homotrimer.

The catalysed reaction is a UDP-3-O-[(3R)-3-hydroxyacyl]-alpha-D-glucosamine + a (3R)-hydroxyacyl-[ACP] = a UDP-2-N,3-O-bis[(3R)-3-hydroxyacyl]-alpha-D-glucosamine + holo-[ACP] + H(+). It functions in the pathway bacterial outer membrane biogenesis; LPS lipid A biosynthesis. Catalyzes the N-acylation of UDP-3-O-acylglucosamine using 3-hydroxyacyl-ACP as the acyl donor. Is involved in the biosynthesis of lipid A, a phosphorylated glycolipid that anchors the lipopolysaccharide to the outer membrane of the cell. This chain is UDP-3-O-acylglucosamine N-acyltransferase, found in Rickettsia bellii (strain RML369-C).